The chain runs to 260 residues: Triosephosphate isomerase (260 aa).

11 to 13 (NWK) lines the substrate pocket. The Electrophile role is filled by H103. E175 (proton acceptor) is an active-site residue. Residues G181, S220, and 241-242 (GG) each bind substrate.

This sequence belongs to the triosephosphate isomerase family. Homodimer.

It is found in the cytoplasm. It carries out the reaction D-glyceraldehyde 3-phosphate = dihydroxyacetone phosphate. It functions in the pathway carbohydrate biosynthesis; gluconeogenesis. Its pathway is carbohydrate degradation; glycolysis; D-glyceraldehyde 3-phosphate from glycerone phosphate: step 1/1. Involved in the gluconeogenesis. Catalyzes stereospecifically the conversion of dihydroxyacetone phosphate (DHAP) to D-glyceraldehyde-3-phosphate (G3P). This Shewanella loihica (strain ATCC BAA-1088 / PV-4) protein is Triosephosphate isomerase.